We begin with the raw amino-acid sequence, 338 residues long: Tetraacyldisaccharide 4'-kinase (338 aa).

63–70 contacts ATP; that stretch reads TVGGAGKT.

This sequence belongs to the LpxK family.

It catalyses the reaction a lipid A disaccharide + ATP = a lipid IVA + ADP + H(+). It functions in the pathway glycolipid biosynthesis; lipid IV(A) biosynthesis; lipid IV(A) from (3R)-3-hydroxytetradecanoyl-[acyl-carrier-protein] and UDP-N-acetyl-alpha-D-glucosamine: step 6/6. Transfers the gamma-phosphate of ATP to the 4'-position of a tetraacyldisaccharide 1-phosphate intermediate (termed DS-1-P) to form tetraacyldisaccharide 1,4'-bis-phosphate (lipid IVA). The chain is Tetraacyldisaccharide 4'-kinase from Hahella chejuensis (strain KCTC 2396).